A 146-amino-acid chain; its full sequence is Peptide methionine sulfoxide reductase MsrB (146 aa).

The 124-residue stretch at 6 to 129 (SAEAIAKLSA…NSASLRFVPK (124 aa)) folds into the MsrB domain. The Nucleophile role is filled by Cys118.

The protein belongs to the MsrB Met sulfoxide reductase family.

It catalyses the reaction L-methionyl-[protein] + [thioredoxin]-disulfide + H2O = L-methionyl-(R)-S-oxide-[protein] + [thioredoxin]-dithiol. The protein is Peptide methionine sulfoxide reductase MsrB of Brucella melitensis biotype 1 (strain ATCC 23456 / CCUG 17765 / NCTC 10094 / 16M).